Here is a 329-residue protein sequence, read N- to C-terminus: Glycerol-3-phosphate dehydrogenase [NAD(P)+] (329 aa).

2 residues coordinate NADPH: W11 and K101. Residues K101, G132, and S134 each contribute to the sn-glycerol 3-phosphate site. Position 136 (A136) interacts with NADPH. The sn-glycerol 3-phosphate site is built by K188, D241, S251, R252, and N253. The Proton acceptor role is filled by K188. R252 is a binding site for NADPH. The NADPH site is built by V276 and E278.

The protein belongs to the NAD-dependent glycerol-3-phosphate dehydrogenase family.

The protein resides in the cytoplasm. The enzyme catalyses sn-glycerol 3-phosphate + NAD(+) = dihydroxyacetone phosphate + NADH + H(+). It carries out the reaction sn-glycerol 3-phosphate + NADP(+) = dihydroxyacetone phosphate + NADPH + H(+). The protein operates within membrane lipid metabolism; glycerophospholipid metabolism. Functionally, catalyzes the reduction of the glycolytic intermediate dihydroxyacetone phosphate (DHAP) to sn-glycerol 3-phosphate (G3P), the key precursor for phospholipid synthesis. This Phytoplasma australiense protein is Glycerol-3-phosphate dehydrogenase [NAD(P)+].